We begin with the raw amino-acid sequence, 198 residues long: Na(+)-translocating NADH-quinone reductase subunit E (198 aa).

The next 6 helical transmembrane spans lie at 11–31, 35–55, 77–97, 110–130, 140–160, and 176–196; these read SVFI…FLAV, VSTA…AVPV, FLNF…LEMV, GIFL…SFMV, VVYG…LAGI, and LGIT…FSGI.

The protein belongs to the NqrDE/RnfAE family. Composed of six subunits; NqrA, NqrB, NqrC, NqrD, NqrE and NqrF.

It localises to the cell inner membrane. It carries out the reaction a ubiquinone + n Na(+)(in) + NADH + H(+) = a ubiquinol + n Na(+)(out) + NAD(+). NQR complex catalyzes the reduction of ubiquinone-1 to ubiquinol by two successive reactions, coupled with the transport of Na(+) ions from the cytoplasm to the periplasm. NqrA to NqrE are probably involved in the second step, the conversion of ubisemiquinone to ubiquinol. The chain is Na(+)-translocating NADH-quinone reductase subunit E from Pasteurella multocida (strain Pm70).